The sequence spans 42 residues: Photosystem II reaction center protein J (42 aa).

A helical membrane pass occupies residues 10 to 30; the sequence is IPLWLVGTVVGTLALGLVALF.

The protein belongs to the PsbJ family. In terms of assembly, PSII is composed of 1 copy each of membrane proteins PsbA, PsbB, PsbC, PsbD, PsbE, PsbF, PsbH, PsbI, PsbJ, PsbK, PsbL, PsbM, PsbT, PsbX, PsbY, PsbZ, Psb30/Ycf12, at least 3 peripheral proteins of the oxygen-evolving complex and a large number of cofactors. It forms dimeric complexes.

It is found in the plastid. It localises to the chloroplast thylakoid membrane. Functionally, one of the components of the core complex of photosystem II (PSII). PSII is a light-driven water:plastoquinone oxidoreductase that uses light energy to abstract electrons from H(2)O, generating O(2) and a proton gradient subsequently used for ATP formation. It consists of a core antenna complex that captures photons, and an electron transfer chain that converts photonic excitation into a charge separation. In Oltmannsiellopsis viridis (Marine flagellate), this protein is Photosystem II reaction center protein J.